A 268-amino-acid polypeptide reads, in one-letter code: Adenosylcobinamide-GDP ribazoletransferase (268 aa).

6 helical membrane passes run 54 to 74 (IAGL…GVLW), 80 to 100 (AVVL…DGLS), 124 to 144 (IGVM…AFLA), 150 to 170 (WLTA…YGIV), 202 to 222 (ALAL…VWMV), and 243 to 263 (GALC…SAPM).

The protein belongs to the CobS family. The cofactor is Mg(2+).

Its subcellular location is the cell membrane. It carries out the reaction alpha-ribazole + adenosylcob(III)inamide-GDP = adenosylcob(III)alamin + GMP + H(+). It catalyses the reaction alpha-ribazole 5'-phosphate + adenosylcob(III)inamide-GDP = adenosylcob(III)alamin 5'-phosphate + GMP + H(+). The protein operates within cofactor biosynthesis; adenosylcobalamin biosynthesis; adenosylcobalamin from cob(II)yrinate a,c-diamide: step 7/7. Functionally, joins adenosylcobinamide-GDP and alpha-ribazole to generate adenosylcobalamin (Ado-cobalamin). Also synthesizes adenosylcobalamin 5'-phosphate from adenosylcobinamide-GDP and alpha-ribazole 5'-phosphate. This chain is Adenosylcobinamide-GDP ribazoletransferase, found in Roseiflexus sp. (strain RS-1).